The chain runs to 210 residues: Amelogenin, X isoform (210 aa).

The first 16 residues, 1-16 (MGTWILFACLLGAAFA), serve as a signal peptide directing secretion. Ser-32 is modified (phosphoserine). 2 stretches are compositionally biased toward low complexity: residues 109-119 (VAPQQPMMPVP) and 136-169 (PSAQ…HPMQ). The tract at residues 109–187 (VAPQQPMMPV…PPLFSMQPLS (79 aa)) is disordered. A compositionally biased stretch (pro residues) spans 170 to 179 (PLAPQPPLPP).

This sequence belongs to the amelogenin family. Interacts with KRT5. Post-translationally, several forms are produced by C-terminal processing. Phosphorylated by FAM20C in vitro.

It localises to the secreted. It is found in the extracellular space. The protein localises to the extracellular matrix. In terms of biological role, plays a role in the biomineralization of teeth. Seems to regulate the formation of crystallites during the secretory stage of tooth enamel development. Thought to play a major role in the structural organization and mineralization of developing enamel. This chain is Amelogenin, X isoform (Amelx), found in Mus musculus (Mouse).